The sequence spans 242 residues: MNLILLWALLNLPVALTFDPNYKDDITPPYLIYLKSDYLPCVGVLIHPLWVITAANCNLPRLQLILGVTKPSNIDEEKYVQVVGYEKMIHHPQFSITSIEHNLMLIKLQTHIELNNYVKIVSLPKEPAAEDDTCIVSTWAYNLCDHYKDPDSLQNVNISVISKVECLKAYKYMHIRDSMMCVGIVPGRRQPCKEVTAAPAVCNGILQGILTFADGCVLRADVGIYTRIINYIPWIENTIQNN.

A signal peptide spans 1 to 17 (MNLILLWALLNLPVALT). One can recognise a Peptidase S1 domain in the interval 18–240 (FDPNYKDDIT…YIPWIENTIQ (223 aa)). 4 cysteine pairs are disulfide-bonded: cysteine 41-cysteine 57, cysteine 134-cysteine 202, cysteine 166-cysteine 181, and cysteine 192-cysteine 216. Asparagine 157 is a glycosylation site (N-linked (GlcNAc...) asparagine).

Belongs to the peptidase S1 family.

Its subcellular location is the secreted. This Bos taurus (Bovine) protein is Probable inactive serine protease 58 (PRSS58).